The primary structure comprises 419 residues: NF-kappa-B essential modulator (419 aa).

A disordered region spans residues 1–48; sequence MSRPPWKSPLCEMVQPSGSPAGDQDMLGEESSLGKPAMLHVPSEQGTP. A required for interaction with and ubiquitination by MARCHF2 region spans residues 1 to 197; the sequence is MSRPPWKSPL…REALEQRHSV (197 aa). A phosphoserine; by IKKB mark is found at Ser-31 and Ser-43. The interaction with CHUK/IKBKB stretch occupies residues 44 to 111; it reads EQGTPETFQR…DLVVRLSLEK (68 aa). Residues 49 to 353 adopt a coiled-coil conformation; sequence ETFQRCLEEN…KTSCQESARI (305 aa). At Ser-68 the chain carries Phosphoserine. Glycyl lysine isopeptide (Lys-Gly) (interchain with G-Cter in ubiquitin) cross-links involve residues Lys-111, Lys-139, Lys-143, Lys-226, Lys-246, and Lys-264. The interval 150-257 is interaction with TANK; the sequence is LGELQESQSR…SMVSSERNRG (108 aa). The ubiquitin-binding (UBAN) stretch occupies residues 242–350; the sequence is DNHMKSSMVS…SRLKTSCQES (109 aa). The interval 246-365 is self-association; that stretch reads KSSMVSSERN…MRKRHVEVSQ (120 aa). The segment at 251-419 is required for interaction with TNFAIP3; it reads SSERNRGLQL…LQIHVMECIE (169 aa). Residue Lys-277 forms a Glycyl lysine isopeptide (Lys-Gly) (interchain with G-Cter in SUMO); alternate linkage. Residue Lys-277 forms a Glycyl lysine isopeptide (Lys-Gly) (interchain with G-Cter in ubiquitin); alternate linkage. Glycyl lysine isopeptide (Lys-Gly) (interchain with G-Cter in ubiquitin) cross-links involve residues Lys-283, Lys-285, Lys-292, and Lys-302. Residue Lys-309 forms a Glycyl lysine isopeptide (Lys-Gly) (interchain with G-Cter in SUMO); alternate linkage. Residue Lys-309 forms a Glycyl lysine isopeptide (Lys-Gly) (interchain with G-Cter in ubiquitin); alternate linkage. Glycyl lysine isopeptide (Lys-Gly) (interchain with G-Cter in ubiquitin) cross-links involve residues Lys-321, Lys-325, and Lys-326. The interval 322 to 343 is leucine-zipper; sequence LAEKKEFLQEQLEQLQREYSRL. The tract at residues 356–394 is disordered; sequence MRKRHVEVSQPPLAPGPAHHSFHLNPSSQRRSPPDEPPK. At Ser-376 the chain carries Phosphoserine; by IKKB. The interaction with CYLD stretch occupies residues 382-419; that stretch reads SSQRRSPPDEPPKFCCPKCQYQAPDIDTLQIHVMECIE. At Ser-387 the chain carries Phosphoserine. A CCHC NOA-type zinc finger spans residues 389–419; it reads PDEPPKFCCPKCQYQAPDIDTLQIHVMECIE. Zn(2+) is bound at residue Cys-397. Lys-399 is covalently cross-linked (Glycyl lysine isopeptide (Lys-Gly) (interchain with G-Cter in ubiquitin)). Cys-400, His-413, and Cys-417 together coordinate Zn(2+).

As to quaternary structure, homodimer; disulfide-linked. Component of the I-kappa-B-kinase (IKK) core complex consisting of CHUK, IKBKB and IKBKG; probably four alpha/CHUK-beta/IKBKB dimers are associated with four gamma/IKBKG subunits. The IKK core complex seems to associate with regulatory or adapter proteins to form a IKK-signalosome holo-complex. The IKK complex associates with TERF2IP/RAP1, leading to promote IKK-mediated phosphorylation of RELA/p65. Part of a complex composed of NCOA2, NCOA3, CHUK/IKKA, IKBKB, IKBKG and CREBBP. Interacts with COPS3, CYLD, NALP2, TRPC4AP and PIDD1. Interacts with ATM; the complex is exported from the nucleus. Interacts with TRAF6. Interacts with IKBKE. Interacts with TANK; the interaction is enhanced by IKBKE and TBK1. Part of a ternary complex consisting of TANK, IKBKB and IKBKG. Interacts with ZFAND5. Interacts with RIPK2. Interacts with TNIP1 and TNFAIP3; TNIP1 facilitates the TNFAIP3-mediated de-ubiquitination of IKBKG. Interacts with TNFAIP3; the interaction is induced by TNF stimulation and by polyubiquitin. Binds (via UBAN region) polyubiquitin; binds both 'Lys-63'-linked and linear polyubiquitin, with higher affinity for linear ubiquitin. Interacts with NLRP10. Interacts with TANK; this interaction increases in response to DNA damage. Interacts with USP10; this interaction increases in response to DNA damage. Interacts with ZC3H12A; this interaction increases in response to DNA damage. Interacts with IFIT5; the interaction synergizes the recruitment of IKK to MAP3K7 and enhances IKK phosphorylation. Interacts with TRIM29; this interaction induces IKBKG/NEMO ubiquitination and proteolytic degradation. Interacts with TRIM13; this interaction leads to IKBKG/NEMO ubiquitination. Interacts with ARFIP2. Interacts with RIPK1. Interacts with (ubiquitinated) BCL10; interaction with polyubiquitinated BCL10 via both 'Lys-63'-linked and linear ubiquitin is required for TCR-induced NF-kappa-B activation. Interacts with MARCHF2; during the late stages of macrophage viral and bacterial infection; the interaction leads to ubiquitination and degradation of IKBKG/NEMO. Post-translationally, phosphorylation at Ser-68 attenuates aminoterminal homodimerization. In terms of processing, polyubiquitinated on Lys-285 through 'Lys-63'; the ubiquitination is mediated downstream of NOD2 and RIPK2 and probably plays a role in signaling by facilitating interactions with ubiquitin domain-containing proteins and activates the NF-kappa-B pathway. Polyubiquitinated on Lys-399 through 'Lys-63'; the ubiquitination is mediated by BCL10, MALT1 and TRAF6 and probably plays a role in signaling by facilitating interactions with ubiquitin domain-containing proteins and activates the NF-kappa-B pathway. Monoubiquitinated on Lys-277 and Lys-309; promotes nuclear export. Polyubiquitinated through 'Lys-27' by TRIM23; involved in antiviral innate and inflammatory responses. Linear polyubiquitinated on Lys-111, Lys-143, Lys-226, Lys-246, Lys-264, Lys-277, Lys-285, Lys-292, Lys-302, Lys-309 and Lys-326; the head-to-tail polyubiquitination is mediated by the LUBAC complex and plays a key role in NF-kappa-B activation. Deubiquitinated by USP10 in a TANK-dependent and -independent manner, leading to the negative regulation of NF-kappa-B signaling upon DNA damage. Ubiquitinated at Lys-326 by MARCHF2 following bacterial and viral infection which leads to its degradation. Polyubiquitinated via 'Lys-29'-linked ubiquitin; leading to lysosomal degradation. Sumoylated on Lys-277 and Lys-309 with SUMO1. Post-translationally, neddylated by TRIM40, resulting in stabilization of NFKBIA and down-regulation of NF-kappa-B activity.

Its subcellular location is the cytoplasm. The protein resides in the nucleus. Its function is as follows. Regulatory subunit of the IKK core complex which phosphorylates inhibitors of NF-kappa-B thus leading to the dissociation of the inhibitor/NF-kappa-B complex and ultimately the degradation of the inhibitor. Its binding to scaffolding polyubiquitin plays a key role in IKK activation by multiple signaling receptor pathways. Can recognize and bind both 'Lys-63'-linked and linear polyubiquitin upon cell stimulation, with a much highr affinity for linear polyubiquitin. Could be implicated in NF-kappa-B-mediated protection from cytokine toxicity. Essential for viral activation of IRF3. Involved in TLR3- and IFIH1-mediated antiviral innate response; this function requires 'Lys-27'-linked polyubiquitination. This Bos taurus (Bovine) protein is NF-kappa-B essential modulator (IKBKG).